We begin with the raw amino-acid sequence, 317 residues long: Melanocyte-stimulating hormone receptor (317 aa).

The Extracellular portion of the chain corresponds to 1–37 (MPMQGAQRKLLGSLNSTPTATSNLGLAANHTGAPCLE). Residue N29 is glycosylated (N-linked (GlcNAc...) asparagine). A helical transmembrane segment spans residues 38-63 (VSIPDGLFLSLGLVSLVENVLVVAAV). Residues 64–72 (AKNRNLHSS) lie on the Cytoplasmic side of the membrane. Residues 73–93 (MYCFICCLALSDLLVSGSNML) form a helical membrane-spanning segment. Residues 94 to 118 (ETAVILLLETGALATRTSVVQQLHN) lie on the Extracellular side of the membrane. A helical transmembrane segment spans residues 119–140 (TINVLTCSSMLCSLCFLGAIAV). Residues 141–163 (DRYISIFYALRYHSIMTLPRAQR) lie on the Cytoplasmic side of the membrane. The helical transmembrane segment at 164 to 183 (AIAAIWVASVLSSTLFITYY) threads the bilayer. Residues 184–191 (DHAAVLLC) are Extracellular-facing. A helical transmembrane segment spans residues 192-211 (LVVFFLAMLVLMAVLYVHML). The Cytoplasmic segment spans residues 212–240 (ARACQHAHGIIRLHKRQTPAHQGFGLRGA). A helical membrane pass occupies residues 241-266 (ATLTILLGIFFLCWGPFFLHLTLVVF). Topologically, residues 267 to 279 (CPQHLTCSCIFKN) are extracellular. Residues 280 to 300 (FKVFLTLIICNTIIDPLIYAF) form a helical membrane-spanning segment. Residues 301–317 (RSQELRRTLKEVLLCSW) lie on the Cytoplasmic side of the membrane. C315 is lipidated: S-palmitoyl cysteine.

This sequence belongs to the G-protein coupled receptor 1 family. As to quaternary structure, interacts with MGRN1, but does not undergo MGRN1-mediated ubiquitination; this interaction competes with GNAS-binding and thus inhibits agonist-induced cAMP production. Interacts with OPN3; the interaction results in a decrease in MC1R-mediated cAMP signaling and ultimately a decrease in melanin production in melanocytes.

The protein localises to the cell membrane. In terms of biological role, receptor for MSH (alpha, beta and gamma) and ACTH. The activity of this receptor is mediated by G proteins which activate adenylate cyclase. Mediates melanogenesis, the production of eumelanin (black/brown) and phaeomelanin (red/yellow), via regulation of cAMP signaling in melanocytes. This is Melanocyte-stimulating hormone receptor (MC1R) from Saguinus oedipus (Cotton-top tamarin).